We begin with the raw amino-acid sequence, 159 residues long: Protein SPA, chloroplastic (159 aa).

The N-terminal 47 residues, 1–47 (MLTAPSLSRFKSPFISSPLKLPTLSSSFFTQKFHQTCRRRNSYPCIK), are a transit peptide targeting the chloroplast. A helical membrane pass occupies residues 56-76 (VIAITVGVLSVAIGVGIPVFY). The interval 85-145 (KRENTQPCFP…TCTTCQGSGI (61 aa)) is CR-type-like. CXXCXGXG motif repeat units lie at residues 92 to 99 (CFPCTGTG), 103 to 110 (CRFCMGTG), 126 to 133 (CINCDGAG), and 137 to 144 (CTTCQGSG).

Expressed in source leaves. Lower levels of expression in fruits and stems.

Its subcellular location is the plastid. The protein resides in the chloroplast thylakoid membrane. In terms of biological role, participates in determining harvest index (HI) by affecting source-sink carbon distribution. Up-regulates the conversion of fixed carbon to exportable sugars. The sequence is that of Protein SPA, chloroplastic from Solanum lycopersicum (Tomato).